Consider the following 114-residue polypeptide: Large ribosomal subunit protein bL19 (114 aa).

It belongs to the bacterial ribosomal protein bL19 family.

Functionally, this protein is located at the 30S-50S ribosomal subunit interface and may play a role in the structure and function of the aminoacyl-tRNA binding site. This is Large ribosomal subunit protein bL19 from Lactococcus lactis subsp. cremoris (strain MG1363).